A 142-amino-acid polypeptide reads, in one-letter code: Ribosome maturation factor RimP (142 aa).

Belongs to the RimP family.

It is found in the cytoplasm. Functionally, required for maturation of 30S ribosomal subunits. The chain is Ribosome maturation factor RimP from Aromatoleum aromaticum (strain DSM 19018 / LMG 30748 / EbN1) (Azoarcus sp. (strain EbN1)).